A 236-amino-acid chain; its full sequence is Phosphoribosylaminoimidazole-succinocarboxamide synthase (236 aa).

This sequence belongs to the SAICAR synthetase family.

The enzyme catalyses 5-amino-1-(5-phospho-D-ribosyl)imidazole-4-carboxylate + L-aspartate + ATP = (2S)-2-[5-amino-1-(5-phospho-beta-D-ribosyl)imidazole-4-carboxamido]succinate + ADP + phosphate + 2 H(+). It participates in purine metabolism; IMP biosynthesis via de novo pathway; 5-amino-1-(5-phospho-D-ribosyl)imidazole-4-carboxamide from 5-amino-1-(5-phospho-D-ribosyl)imidazole-4-carboxylate: step 1/2. In Hahella chejuensis (strain KCTC 2396), this protein is Phosphoribosylaminoimidazole-succinocarboxamide synthase.